Consider the following 295-residue polypeptide: uncharacterized protein (295 aa).

The region spanning 151–290 (RTAVCARLSS…RAVAAAARAG (140 aa)) is the Resolvase/invertase-type recombinase catalytic domain. The active-site O-(5'-phospho-DNA)-serine intermediate is S159.

This is an uncharacterized protein from Mycobacterium bovis (strain ATCC BAA-935 / AF2122/97).